Here is a 255-residue protein sequence, read N- to C-terminus: MVDPVAALCNYNVLEVIFSYLELEDLSHCSQVCKSWYHFLNDENSDVWRWHCLNKLPKEALKSDLLSSVSTYKTKLRAYFHAWSPNDCSRNVYIKPNGFTLHRNPVAQSTDAARGKIGFRHGRHTWEVIWEGPLGTVAVIGISTKEAALQCHGYVALLGSDDQSWGWNLVENHLLHNGDMQGSYPLLNNAPKYQVGERIRVILDCEDNTLSFEKNYEFLGVAFRGLPDKKLYPTVSAVYGNTEVSMVYLGTPLDG.

One can recognise an F-box domain in the interval 3–51 (DPVAALCNYNVLEVIFSYLELEDLSHCSQVCKSWYHFLNDENSDVWRWH). One can recognise a B30.2/SPRY domain in the interval 61–253 (LKSDLLSSVS…VSMVYLGTPL (193 aa)).

This sequence belongs to the FBXO45/Fsn family. Component of an E3 ubiquitin ligase complex composed of hiw and Fsn.

The protein localises to the synapse. It functions in the pathway protein modification; protein ubiquitination. Functionally, required in the presynaptic motoneuron to down-regulate the levels of wnd and restrain synaptic terminal growth at the neuromuscular junction (NMJ). This chain is F-box/SPRY domain-containing protein 1, found in Drosophila erecta (Fruit fly).